A 297-amino-acid polypeptide reads, in one-letter code: UDP-N-acetylenolpyruvoylglucosamine reductase (297 aa).

Residues Gln-26–Gly-191 form the FAD-binding PCMH-type domain. The active site involves Arg-170. Ser-220 acts as the Proton donor in catalysis. Residue Glu-290 is part of the active site.

This sequence belongs to the MurB family. The cofactor is FAD.

The protein localises to the cytoplasm. The enzyme catalyses UDP-N-acetyl-alpha-D-muramate + NADP(+) = UDP-N-acetyl-3-O-(1-carboxyvinyl)-alpha-D-glucosamine + NADPH + H(+). Its pathway is cell wall biogenesis; peptidoglycan biosynthesis. Functionally, cell wall formation. This is UDP-N-acetylenolpyruvoylglucosamine reductase from Lactobacillus delbrueckii subsp. bulgaricus (strain ATCC 11842 / DSM 20081 / BCRC 10696 / JCM 1002 / NBRC 13953 / NCIMB 11778 / NCTC 12712 / WDCM 00102 / Lb 14).